The sequence spans 308 residues: Putative mitochondrial transporter UCP3 (308 aa).

The Mitochondrial intermembrane portion of the chain corresponds to 1–10 (MVGLKPPEVP). The helical transmembrane segment at 11 to 32 (PTTAVKLLGAGTAACFADLLTF) threads the bilayer. Solcar repeat units follow at residues 11 to 102 (PTTA…VKQL), 111 to 202 (SSIT…IKEK), and 211 to 296 (DNLP…LKRA). Residues 33-73 (PLDTAKVRLQIQGENQAARSAQYRGVLGTILTMVRNEGPRS) are Mitochondrial matrix-facing. Residues 74 to 96 (PYNGLVAGLQRQMSFASIRIGLY) traverse the membrane as a helical segment. At 97-116 (DSVKQLYTPKGSDHSSITTR) the chain is on the mitochondrial intermembrane side. The helical transmembrane segment at 117–133 (ILAGCTTGAMAVTCAQP) threads the bilayer. Over 134–179 (TDVVKVRFQASIHAGPRSNRKYSGTMDAYRTIAREEGVRGLWKGIL) the chain is Mitochondrial matrix. Residues 180–196 (PNITRNAIVNCAEMVTY) form a helical membrane-spanning segment. Topologically, residues 197–213 (DVIKEKVLDYHLLTDNL) are mitochondrial intermembrane. Residues 214–233 (PCHFVSAFGAGFCATVVASP) traverse the membrane as a helical segment. At 234–267 (VDVVKTRYMNSPPGQYQNPLDCMLKMVTQEGPTA) the chain is on the mitochondrial matrix side. A helical transmembrane segment spans residues 268 to 290 (FYKGFTPSFLRLGSWNVVMFVSY). A purine nucleotide binding region spans residues 275–297 (SFLRLGSWNVVMFVSYEQLKRAL). Residues 291 to 308 (EQLKRALMKVQMLRESPF) are Mitochondrial intermembrane-facing.

This sequence belongs to the mitochondrial carrier (TC 2.A.29) family. As to quaternary structure, interacts with HAX1; the interaction is direct and calcium-dependent.

The protein resides in the mitochondrion inner membrane. Its function is as follows. Putative transmembrane transporter that plays a role in mitochondrial metabolism via an as yet unclear mechanism. Originally, this mitochondrial protein was thought to act as a proton transmembrane transporter from the mitochondrial intermembrane space into the matrix, causing proton leaks through the inner mitochondrial membrane, thereby uncoupling mitochondrial membrane potential generation from ATP synthesis. However, this function is controversial and uncoupling may not be the function, or at least not the main function, but rather a consequence of more conventional metabolite transporter activity. This Sus scrofa (Pig) protein is Putative mitochondrial transporter UCP3.